The chain runs to 555 residues: MTHLSDLDIANQSTLQPIKDIAASVGISEDALEPYGHYKAKIDINKITPRENKGKVVLVTAMSPTPAGEGKSTVTVGLADAFHELNKNVMVALREPALGPTFGIKGGATGGGYAQVLPMEDINLHFNGDFHAITTANNALSAFIDNHIHQGNELGIDQRRIEWKRVLDMNDRALRHVNVGLGGPTNGVPREDGFNITVASEIMAILCLSRSIKDLKDKISRITIGYTRDRKPVTVADLKVEGALAMILKDAIKPNLVQSIEGTPALVHGGPFANIAHGCNSILATETARDLADIVVTEAGFGSDLGAEKFMDIKVREAGFDPAAVVVVATIRALKMHGGVAKDNLKEENVEAVKAGIVNLERHVNNIKKFGVEPVVAINAFIHDTDAEVEYVKSWAKENNVRIALTEVWKKGGKGGVDLANEVLEVIDQPNSFKPLYELELPLEQKIEKIVTEIYGGSKVTFSSKAQKQLKQFKENGWDNYPVCMAKTQYSFSDDQTLLGAPSGFEITIRELEAKTGAGFIVALTGAIMTMPGLPKKPAALNMDVTDDGHAIGLF.

65 to 72 (TPAGEGKS) lines the ATP pocket.

The protein belongs to the formate--tetrahydrofolate ligase family.

It catalyses the reaction (6S)-5,6,7,8-tetrahydrofolate + formate + ATP = (6R)-10-formyltetrahydrofolate + ADP + phosphate. It participates in one-carbon metabolism; tetrahydrofolate interconversion. The chain is Formate--tetrahydrofolate ligase from Staphylococcus aureus (strain USA300).